The primary structure comprises 360 residues: Mitogen-activated protein kinase 14 (360 aa).

S2 carries the N-acetylserine modification. S2 is modified (phosphoserine). T16 carries the phosphothreonine modification. A Protein kinase domain is found at 24-308; it reads YQNLSPVGSG…AAQALAHAYF (285 aa). Residues 30 to 38 and K53 each bind ATP; that span reads VGSGAYGSV. N6-acetyllysine is present on K53. The active-site Proton acceptor is D150. An N6-acetyllysine modification is found at K152. T180 carries the post-translational modification Phosphothreonine; by MAP2K3, MAP2K4, MAP2K6 and autocatalysis. The residue at position 182 (Y182) is a Phosphotyrosine; by MAP2K3, MAP2K4, MAP2K6 and autocatalysis. A Phosphothreonine modification is found at T263. Phosphotyrosine; by ZAP70 is present on Y323.

This sequence belongs to the protein kinase superfamily. CMGC Ser/Thr protein kinase family. MAP kinase subfamily. As to quaternary structure, component of a signaling complex containing at least AKAP13, PKN1, MAPK14, ZAK and MAP2K3. Within this complex, AKAP13 interacts directly with PKN1, which in turn recruits MAPK14, MAP2K3 and ZAK. Binds to a kinase interaction motif within the protein tyrosine phosphatase, PTPRR. This interaction retains MAPK14 in the cytoplasm and prevents nuclear accumulation. Interacts with SPAG9 and GADD45A. Interacts with CDC25B, CDC25C, DUSP1, DUSP10, DUSP16, NP60, SUPT20H and TAB1. Interacts with casein kinase II subunits CSNK2A1 and CSNK2B. Interacts with PPM1D. Interacts with CDK5RAP3; recruits PPM1D to MAPK14 and may regulate its dephosphorylation. Interacts with DUSP2; this interaction does not lead to catalytic activation of DUSP2 and dephosphrylation of MAPK14. The cofactor is Mg(2+). Dually phosphorylated on Thr-180 and Tyr-182 by the MAP2Ks MAP2K3/MKK3, MAP2K4/MKK4 and MAP2K6/MKK6 in response to inflammatory cytokines, environmental stress or growth factors, which activates the enzyme. Dual phosphorylation can also be mediated by TAB1-mediated autophosphorylation. TCR engagement in T-cells also leads to Tyr-323 phosphorylation by ZAP70. Dephosphorylated and inactivated by DUPS1, DUSP10 and DUSP16. PPM1D also mediates dephosphorylation and inactivation of MAPK14. In terms of processing, acetylated at Lys-53 and Lys-152 by KAT2B and EP300. Acetylation at Lys-53 increases the affinity for ATP and enhances kinase activity. Lys-53 and Lys-152 are deacetylated by HDAC3. Post-translationally, ubiquitinated. Ubiquitination leads to degradation by the proteasome pathway.

It is found in the cytoplasm. Its subcellular location is the nucleus. It catalyses the reaction L-seryl-[protein] + ATP = O-phospho-L-seryl-[protein] + ADP + H(+). The enzyme catalyses L-threonyl-[protein] + ATP = O-phospho-L-threonyl-[protein] + ADP + H(+). Its activity is regulated as follows. Activated by cell stresses such as DNA damage, heat shock, osmotic shock, anisomycin and sodium arsenite, as well as pro-inflammatory stimuli such as bacterial lipopolysaccharide (LPS) and interleukin-1. Activation occurs through dual phosphorylation of Thr-180 and Tyr-182 by either of two dual specificity kinases, MAP2K3/MKK3 or MAP2K6/MKK6, and potentially also MAP2K4/MKK4, as well as by TAB1-mediated autophosphorylation. MAPK14 phosphorylated on both Thr-180 and Tyr-182 is 10-20-fold more active than MAPK14 phosphorylated only on Thr-180, whereas MAPK14 phosphorylated on Tyr-182 alone is inactive. whereas Thr-180 is necessary for catalysis, Tyr-182 may be required for auto-activation and substrate recognition. Phosphorylated at Tyr-323 by ZAP70 in an alternative activation pathway in response to TCR signaling in T-cells. This alternative pathway is inhibited by GADD45A. Inhibited by dual specificity phosphatases, such as DUSP1, DUSP10, and DUSP16. Specifically inhibited by the binding of pyridinyl-imidazole compounds, which are cytokine-suppressive anti-inflammatory drugs (CSAID). SB203580 is an inhibitor of MAPK14. Its function is as follows. Serine/threonine kinase which acts as an essential component of the MAP kinase signal transduction pathway. MAPK14 is one of the four p38 MAPKs which play an important role in the cascades of cellular responses evoked by extracellular stimuli such as pro-inflammatory cytokines or physical stress leading to direct activation of transcription factors. Accordingly, p38 MAPKs phosphorylate a broad range of proteins and it has been estimated that they may have approximately 200 to 300 substrates each. Some of the targets are downstream kinases which are activated through phosphorylation and further phosphorylate additional targets. RPS6KA5/MSK1 and RPS6KA4/MSK2 can directly phosphorylate and activate transcription factors such as CREB1, ATF1, the NF-kappa-B isoform RELA/NFKB3, STAT1 and STAT3, but can also phosphorylate histone H3 and the nucleosomal protein HMGN1. RPS6KA5/MSK1 and RPS6KA4/MSK2 play important roles in the rapid induction of immediate-early genes in response to stress or mitogenic stimuli, either by inducing chromatin remodeling or by recruiting the transcription machinery. On the other hand, two other kinase targets, MAPKAPK2/MK2 and MAPKAPK3/MK3, participate in the control of gene expression mostly at the post-transcriptional level, by phosphorylating ZFP36 (tristetraprolin) and ELAVL1, and by regulating EEF2K, which is important for the elongation of mRNA during translation. MKNK1/MNK1 and MKNK2/MNK2, two other kinases activated by p38 MAPKs, regulate protein synthesis by phosphorylating the initiation factor EIF4E2. MAPK14 also interacts with casein kinase II, leading to its activation through autophosphorylation and further phosphorylation of TP53/p53. In the cytoplasm, the p38 MAPK pathway is an important regulator of protein turnover. For example, CFLAR is an inhibitor of TNF-induced apoptosis whose proteasome-mediated degradation is regulated by p38 MAPK phosphorylation. In a similar way, MAPK14 phosphorylates the ubiquitin ligase SIAH2, regulating its activity towards EGLN3. MAPK14 may also inhibit the lysosomal degradation pathway of autophagy by interfering with the intracellular trafficking of the transmembrane protein ATG9. Another function of MAPK14 is to regulate the endocytosis of membrane receptors by different mechanisms that impinge on the small GTPase RAB5A. In addition, clathrin-mediated EGFR internalization induced by inflammatory cytokines and UV irradiation depends on MAPK14-mediated phosphorylation of EGFR itself as well as of RAB5A effectors. Ectodomain shedding of transmembrane proteins is regulated by p38 MAPKs as well. In response to inflammatory stimuli, p38 MAPKs phosphorylate the membrane-associated metalloprotease ADAM17. Such phosphorylation is required for ADAM17-mediated ectodomain shedding of TGF-alpha family ligands, which results in the activation of EGFR signaling and cell proliferation. Another p38 MAPK substrate is FGFR1. FGFR1 can be translocated from the extracellular space into the cytosol and nucleus of target cells, and regulates processes such as rRNA synthesis and cell growth. FGFR1 translocation requires p38 MAPK activation. In the nucleus, many transcription factors are phosphorylated and activated by p38 MAPKs in response to different stimuli. Classical examples include ATF1, ATF2, ATF6, ELK1, PTPRH, DDIT3, TP53/p53 and MEF2C and MEF2A. The p38 MAPKs are emerging as important modulators of gene expression by regulating chromatin modifiers and remodelers. The promoters of several genes involved in the inflammatory response, such as IL6, IL8 and IL12B, display a p38 MAPK-dependent enrichment of histone H3 phosphorylation on 'Ser-10' (H3S10ph) in LPS-stimulated myeloid cells. This phosphorylation enhances the accessibility of the cryptic NF-kappa-B-binding sites marking promoters for increased NF-kappa-B recruitment. Phosphorylates CDC25B and CDC25C which is required for binding to 14-3-3 proteins and leads to initiation of a G2 delay after ultraviolet radiation. Phosphorylates TIAR following DNA damage, releasing TIAR from GADD45A mRNA and preventing mRNA degradation. The p38 MAPKs may also have kinase-independent roles, which are thought to be due to the binding to targets in the absence of phosphorylation. Protein O-Glc-N-acylation catalyzed by the OGT is regulated by MAPK14, and, although OGT does not seem to be phosphorylated by MAPK14, their interaction increases upon MAPK14 activation induced by glucose deprivation. This interaction may regulate OGT activity by recruiting it to specific targets such as neurofilament H, stimulating its O-Glc-N-acylation. Required in mid-fetal development for the growth of embryo-derived blood vessels in the labyrinth layer of the placenta. Also plays an essential role in developmental and stress-induced erythropoiesis, through regulation of EPO gene expression. Phosphorylates S100A9 at 'Thr-113'. This chain is Mitogen-activated protein kinase 14, found in Pan troglodytes (Chimpanzee).